The following is a 100-amino-acid chain: UPF0298 protein lp_2135 (100 aa).

The protein belongs to the UPF0298 family.

It localises to the cytoplasm. The sequence is that of UPF0298 protein lp_2135 from Lactiplantibacillus plantarum (strain ATCC BAA-793 / NCIMB 8826 / WCFS1) (Lactobacillus plantarum).